The primary structure comprises 242 residues: Uridylate kinase (242 aa).

16-19 provides a ligand contact to ATP; sequence KISG. The segment at 24 to 29 is involved in allosteric activation by GTP; sequence GDQGFG. Gly58 is a UMP binding site. Positions 59 and 63 each coordinate ATP. UMP-binding positions include Asp78 and 139–146; that span reads TGNPYFTT. 3 residues coordinate ATP: Thr166, Tyr172, and Asp175.

The protein belongs to the UMP kinase family. As to quaternary structure, homohexamer.

The protein resides in the cytoplasm. The catalysed reaction is UMP + ATP = UDP + ADP. It participates in pyrimidine metabolism; CTP biosynthesis via de novo pathway; UDP from UMP (UMPK route): step 1/1. Allosterically activated by GTP. Inhibited by UTP. Its function is as follows. Catalyzes the reversible phosphorylation of UMP to UDP. This is Uridylate kinase from Roseobacter denitrificans (strain ATCC 33942 / OCh 114) (Erythrobacter sp. (strain OCh 114)).